The chain runs to 258 residues: Cytochrome b-c1 complex subunit Rieske-1, mitochondrial (258 aa).

The N-terminal 46 residues, tryptophan 1–phenylalanine 46, are a transit peptide targeting the mitochondrion. Residues serine 47–arginine 95 lie on the Mitochondrial matrix side of the membrane. The chain crosses the membrane as a helical span at residues alanine 96 to leucine 118. Residues lysine 119 to glycine 258 are Mitochondrial intermembrane-facing. One can recognise a Rieske domain in the interval arginine 161 to leucine 256. Residues cysteine 201, histidine 203, cysteine 220, and histidine 223 each contribute to the [2Fe-2S] cluster site. A disulfide bridge links cysteine 206 with cysteine 222.

This sequence belongs to the Rieske iron-sulfur protein family. As to quaternary structure, component of the ubiquinol-cytochrome c oxidoreductase (cytochrome b-c1 complex, complex III, CIII), a multisubunit enzyme composed of 3 respiratory subunits cytochrome b, cytochrome c1 and Rieske protein, 2 core protein subunits, and several low-molecular weight protein subunits. The complex exists as an obligatory dimer and forms supercomplexes (SCs) in the inner mitochondrial membrane with cytochrome c oxidase (complex IV, CIV). [2Fe-2S] cluster is required as a cofactor.

The protein localises to the mitochondrion inner membrane. It catalyses the reaction a quinol + 2 Fe(III)-[cytochrome c](out) = a quinone + 2 Fe(II)-[cytochrome c](out) + 2 H(+)(out). Its function is as follows. Component of the ubiquinol-cytochrome c oxidoreductase, a multisubunit transmembrane complex that is part of the mitochondrial electron transport chain which drives oxidative phosphorylation. The respiratory chain contains 3 multisubunit complexes succinate dehydrogenase (complex II, CII), ubiquinol-cytochrome c oxidoreductase (cytochrome b-c1 complex, complex III, CIII) and cytochrome c oxidase (complex IV, CIV), that cooperate to transfer electrons derived from NADH and succinate to molecular oxygen, creating an electrochemical gradient over the inner membrane that drives transmembrane transport and the ATP synthase. The cytochrome b-c1 complex catalyzes electron transfer from ubiquinol to cytochrome c, linking this redox reaction to translocation of protons across the mitochondrial inner membrane, with protons being carried across the membrane as hydrogens on the quinol. In the process called Q cycle, 2 protons are consumed from the matrix, 4 protons are released into the intermembrane space and 2 electrons are passed to cytochrome c. The Rieske protein is a catalytic core subunit containing a [2Fe-2S] iron-sulfur cluster. It cycles between 2 conformational states during catalysis to transfer electrons from the quinol bound in the Q(0) site in cytochrome b to cytochrome c1. The polypeptide is Cytochrome b-c1 complex subunit Rieske-1, mitochondrial (Nicotiana tabacum (Common tobacco)).